A 408-amino-acid polypeptide reads, in one-letter code: Peptidase T (408 aa).

Position 78 (His78) interacts with Zn(2+). Residue Asp80 is part of the active site. Asp141 serves as a coordination point for Zn(2+). Glu175 serves as the catalytic Proton acceptor. Residues Glu176, Asp198, and His380 each coordinate Zn(2+).

It belongs to the peptidase M20B family. The cofactor is Zn(2+).

The protein resides in the cytoplasm. It carries out the reaction Release of the N-terminal residue from a tripeptide.. In terms of biological role, cleaves the N-terminal amino acid of tripeptides. This chain is Peptidase T, found in Clostridium botulinum (strain 657 / Type Ba4).